Here is a 715-residue protein sequence, read N- to C-terminus: MGSHPITQDNDLDPPTEPGERYFNRELSWLAFNDRVLAEACNDSYPLLERLRFLSISGSNLDEFVMIRVAGLVGQVQRGIDEVSDDGRSPREQLNAVVARLEELSERQQDIWRNLRVQLADAGVHVADEERVNAEAYGWLKQHFFESILPLLTPQALDPAHPFPFISNEGLGLLFTLRRGGEELVEMVLIPSALPRFIRVPGEDALYISIESLITRFAKELFPGFEIVGDGTFRVLRDSDIEIQEEAEDLVRTFRSAIQRRRRGQVIQLEIEEEFDPTAEALLREKLDTPGATFVKTDGMLGIAGLADIVDEDRPDLKFDSYSPRYPERVLEHDGDIFAAIREKDIVIHHPYESFNVVVDFIRRAAIDPDVVAIKQALYRAGTQSEVVDALVEAAENGKSVTAVVELKARFDEEQNLYWANKLERAGVQVIYGFVDWKTHAKVAMVVRREEEGFRTYCHFGTGNYHPITAKIYTDLSYFTADPRLGRDAAKLFNFVTGYVEPRELEMLAVSPIDLRETIYAAIDNEMVNAQAGKPAAIWMKMNQITDVDMIDRLYEASQAGVEIQLVVRGICNLRPGVPGMSDNIRVKSIIGRFLEHSRIYAFANGEPMPGTSSTVYISSADLMVRNLDRRVEQLVPIDNQTVHDQVLQQVLLANLLDNEQSWELQPDGSYFRVEVGEKSFNCHRYFMTNPSLSGRGGALEAGAVPKLALRKGAV.

Asparagine 60 contributes to the ATP binding site. Residues arginine 380 and arginine 410 each contribute to the Mg(2+) site. Histidine 440 acts as the Phosphohistidine intermediate in catalysis. ATP-binding residues include tyrosine 473, arginine 569, and histidine 597.

It belongs to the polyphosphate kinase 1 (PPK1) family. The cofactor is Mg(2+). An intermediate of this reaction is the autophosphorylated ppk in which a phosphate is covalently linked to a histidine residue through a N-P bond.

It catalyses the reaction [phosphate](n) + ATP = [phosphate](n+1) + ADP. Its function is as follows. Catalyzes the reversible transfer of the terminal phosphate of ATP to form a long-chain polyphosphate (polyP). In Erythrobacter litoralis (strain HTCC2594), this protein is Polyphosphate kinase.